The sequence spans 730 residues: 1,4-alpha-glucan branching enzyme GlgB (730 aa).

Residue Asp-405 is the Nucleophile of the active site. The active-site Proton donor is the Glu-458.

The protein belongs to the glycosyl hydrolase 13 family. GlgB subfamily. Monomer.

The enzyme catalyses Transfers a segment of a (1-&gt;4)-alpha-D-glucan chain to a primary hydroxy group in a similar glucan chain.. The protein operates within glycan biosynthesis; glycogen biosynthesis. In terms of biological role, catalyzes the formation of the alpha-1,6-glucosidic linkages in glycogen by scission of a 1,4-alpha-linked oligosaccharide from growing alpha-1,4-glucan chains and the subsequent attachment of the oligosaccharide to the alpha-1,6 position. This Haemophilus influenzae (strain ATCC 51907 / DSM 11121 / KW20 / Rd) protein is 1,4-alpha-glucan branching enzyme GlgB (glgB).